The following is a 543-amino-acid chain: Thermosome subunit beta (543 aa).

The segment at 522 to 543 is disordered; that stretch reads TKSSSSSSNPPKSGSSSESSED. The span at 523-543 shows a compositional bias: low complexity; the sequence is KSSSSSSNPPKSGSSSESSED.

This sequence belongs to the TCP-1 chaperonin family. Forms a Heterooligomeric complex of two stacked eight-membered rings. The N-terminus is blocked.

Functionally, molecular chaperone; binds unfolded polypeptides in vitro, and has a weak ATPase activity. This chain is Thermosome subunit beta (thsB), found in Thermoplasma acidophilum (strain ATCC 25905 / DSM 1728 / JCM 9062 / NBRC 15155 / AMRC-C165).